A 137-amino-acid polypeptide reads, in one-letter code: Large ribosomal subunit protein uL16 (137 aa).

Positions 1-17 are enriched in basic residues; the sequence is MLQPKRTKFRKTHKGRN. Residues 1–24 form a disordered region; the sequence is MLQPKRTKFRKTHKGRNRGLANTG.

This sequence belongs to the universal ribosomal protein uL16 family. As to quaternary structure, part of the 50S ribosomal subunit.

In terms of biological role, binds 23S rRNA and is also seen to make contacts with the A and possibly P site tRNAs. The chain is Large ribosomal subunit protein uL16 from Aeromonas salmonicida (strain A449).